The sequence spans 455 residues: Phosphoglucosamine mutase (455 aa).

The active-site Phosphoserine intermediate is the S108. Mg(2+)-binding residues include S108, D246, D248, and D250. S108 bears the Phosphoserine mark.

Belongs to the phosphohexose mutase family. The cofactor is Mg(2+). Post-translationally, activated by phosphorylation.

The enzyme catalyses alpha-D-glucosamine 1-phosphate = D-glucosamine 6-phosphate. Catalyzes the conversion of glucosamine-6-phosphate to glucosamine-1-phosphate. This chain is Phosphoglucosamine mutase, found in Frankia alni (strain DSM 45986 / CECT 9034 / ACN14a).